The sequence spans 356 residues: DNA integrity scanning protein DisA (356 aa).

The DAC domain occupies 11 to 149; sequence VHTMRDTLQR…EGKSHILEEP (139 aa). ATP-binding positions include Gly78, Leu96, and 109 to 113; that span reads TRHRS.

Belongs to the DisA family. As to quaternary structure, homooctamer. Requires Mg(2+) as cofactor.

It catalyses the reaction 2 ATP = 3',3'-c-di-AMP + 2 diphosphate. Participates in a DNA-damage check-point. DisA forms globular foci that rapidly scan along the chromosomes searching for lesions. Its function is as follows. Also has diadenylate cyclase activity, catalyzing the condensation of 2 ATP molecules into cyclic di-AMP (c-di-AMP). c-di-AMP likely acts as a signaling molecule that may couple DNA integrity with a cellular process. The polypeptide is DNA integrity scanning protein DisA (Corynebacterium efficiens (strain DSM 44549 / YS-314 / AJ 12310 / JCM 11189 / NBRC 100395)).